A 1213-amino-acid polypeptide reads, in one-letter code: A disintegrin and metalloproteinase with thrombospondin motifs 2 (1213 aa).

Positions 1-28 (MDPPAGAARRLLCPALLLLLLPPPPLLL) are cleaved as a signal peptide. A propeptide spanning residues 29–260 (LPPPPASVRL…INSSRRRVRR (232 aa)) is cleaved from the precursor. Asn-111 carries an N-linked (GlcNAc...) asparagine glycan. The segment at 211–232 (YRRPPTPKPPPVSEPQALDTGV) is disordered. Positions 214–223 (PPTPKPPPVS) are enriched in pro residues. Asn-252 is a glycosylation site (N-linked (GlcNAc...) asparagine). One can recognise a Peptidase M12B domain in the interval 267-471 (YNIEVLLGVD…HSYDCLRDDP (205 aa)). 10 disulfide bridges follow: Cys-344-Cys-393, Cys-387-Cys-466, Cys-426-Cys-452, Cys-493-Cys-518, Cys-504-Cys-527, Cys-513-Cys-546, Cys-540-Cys-551, Cys-574-Cys-611, Cys-578-Cys-616, and Cys-589-Cys-601. A Zn(2+)-binding site is contributed by His-409. Residue Glu-410 is part of the active site. 2 residues coordinate Zn(2+): His-413 and His-419. The 81-residue stretch at 480-560 (PQLPGLHYSM…CIWLTPDILK (81 aa)) folds into the Disintegrin domain. The region spanning 561-617 (RDGNWGAWTPFGSCSRTCGTGVKFRTRQCDNPHPANGGRTCSGLAYDFQLCNPQDCP) is the TSP type-1 1 domain. The Cell attachment site signature appears at 692 to 694 (RGD). The spacer stretch occupies residues 723-851 (CKVVKGTFTR…LNVDDNNVLE (129 aa)). 3 TSP type-1 domains span residues 855–913 (VRHE…NPQE), 915–975 (SQPV…NREL), and 976–1030 (CPGR…APCP). Asn-949, Asn-950, and Asn-994 each carry an N-linked (GlcNAc...) asparagine glycan. 3 disulfide bridges follow: Cys-988/Cys-1024, Cys-992/Cys-1029, and Cys-1003/Cys-1013. An N-linked (GlcNAc...) asparagine glycan is attached at Asn-1032. The region spanning 1060-1098 (SKDQCQGDKSMFCRMEVLSRYCSIPSYNKLCCKSCNPPR) is the PLAC domain. Residues Asn-1099, Asn-1147, and Asn-1152 are each glycosylated (N-linked (GlcNAc...) asparagine).

In terms of assembly, may belong to a multimeric complex. Binds specifically to collagen type XIV. It depends on Zn(2+) as a cofactor. Post-translationally, the precursor is cleaved by a furin endopeptidase. Glycosylated. Can be O-fucosylated by POFUT2 on a serine or a threonine residue found within the consensus sequence C1-X(2)-(S/T)-C2-G of the TSP type-1 repeat domains where C1 and C2 are the first and second cysteine residue of the repeat, respectively. Fucosylated repeats can then be further glycosylated by the addition of a beta-1,3-glucose residue by the glucosyltransferase, B3GALTL. Fucosylation mediates the efficient secretion of ADAMTS family members. Can also be C-glycosylated with one or two mannose molecules on tryptophan residues within the consensus sequence W-X-X-W of the TPRs, and N-glycosylated. These other glycosylations can also facilitate secretion.

It localises to the secreted. It is found in the extracellular space. The protein localises to the extracellular matrix. It carries out the reaction Cleaves the N-propeptide of collagen chain alpha1(I) at Pro-|-Gln and of alpha1(II) and alpha2(I) at Ala-|-Gln.. In terms of biological role, cleaves the propeptides of type I and II collagen prior to fibril assembly. Does not act on type III collagen. Cleaves lysyl oxidase LOX at a site downstream of its propeptide cleavage site to produce a short LOX form with reduced collagen-binding activity. In Mus musculus (Mouse), this protein is A disintegrin and metalloproteinase with thrombospondin motifs 2 (Adamts2).